The chain runs to 250 residues: Beta-crystallin B1 (250 aa).

Residues 1 to 13 show a composition bias toward polar residues; the sequence is MSQAAKASATTAV. The disordered stretch occupies residues 1 to 49; it reads MSQAAKASATTAVNPGPDGKGKGAPSTGPAPAPGPTPVPASVPRPAAKV. An N-acetylserine modification is found at S2. Residues 2–56 form an N-terminal arm region; sequence SQAAKASATTAVNPGPDGKGKGAPSTGPAPAPGPTPVPASVPRPAAKVGDLPPGS. A compositionally biased stretch (pro residues) spans 28–42; sequence GPAPAPGPTPVPASV. Beta/gamma crystallin 'Greek key' domains follow at residues 57–96 and 97–141; these read YRLIVFEQENFQGRRVEFSGECLNLGDRGFDRVRSLIVVS and GPWV…RPIR. The segment at 142-146 is connecting peptide; sequence MDSQE. Beta/gamma crystallin 'Greek key' domains lie at 147–188 and 189–231; these read HKIC…TVSG and GTWV…RRLR. Residues 233 to 250 form a C-terminal arm region; the sequence is RQWHQEGCFPVLTAEPPK.

This sequence belongs to the beta/gamma-crystallin family. Homo/heterodimer, or complexes of higher-order. The structure of beta-crystallin oligomers seems to be stabilized through interactions between the N-terminal arms. In terms of processing, specific cleavages in the N-terminal arm occur during lens maturation and give rise to truncated forms, leading to impaired oligomerization and protein insolubilization. The protease responsible for this partial degradation could be calpain II.

Functionally, crystallins are the dominant structural components of the vertebrate eye lens. In Mus musculus (Mouse), this protein is Beta-crystallin B1 (Crybb1).